The primary structure comprises 594 residues: Arginine--tRNA ligase (594 aa).

The 'HIGH' region motif lies at 133 to 143 (ANPTGPMNIVS).

This sequence belongs to the class-I aminoacyl-tRNA synthetase family. Monomer.

It localises to the cytoplasm. The enzyme catalyses tRNA(Arg) + L-arginine + ATP = L-arginyl-tRNA(Arg) + AMP + diphosphate. The sequence is that of Arginine--tRNA ligase from Leptospira biflexa serovar Patoc (strain Patoc 1 / Ames).